We begin with the raw amino-acid sequence, 319 residues long: 4-hydroxy-3-methylbut-2-enyl diphosphate reductase (319 aa).

Position 18 (Cys-18) interacts with [4Fe-4S] cluster. Residues His-47 and His-81 each contribute to the (2E)-4-hydroxy-3-methylbut-2-enyl diphosphate site. 2 residues coordinate dimethylallyl diphosphate: His-47 and His-81. His-47 and His-81 together coordinate isopentenyl diphosphate. A [4Fe-4S] cluster-binding site is contributed by Cys-103. His-131 serves as a coordination point for (2E)-4-hydroxy-3-methylbut-2-enyl diphosphate. Residue His-131 participates in dimethylallyl diphosphate binding. His-131 serves as a coordination point for isopentenyl diphosphate. Glu-133 functions as the Proton donor in the catalytic mechanism. A (2E)-4-hydroxy-3-methylbut-2-enyl diphosphate-binding site is contributed by Thr-172. Cys-202 is a [4Fe-4S] cluster binding site. (2E)-4-hydroxy-3-methylbut-2-enyl diphosphate-binding residues include Ser-230, Ser-231, Asn-232, and Ser-275. Positions 230, 231, 232, and 275 each coordinate dimethylallyl diphosphate. Isopentenyl diphosphate contacts are provided by Ser-230, Ser-231, Asn-232, and Ser-275.

The protein belongs to the IspH family. [4Fe-4S] cluster serves as cofactor.

It carries out the reaction isopentenyl diphosphate + 2 oxidized [2Fe-2S]-[ferredoxin] + H2O = (2E)-4-hydroxy-3-methylbut-2-enyl diphosphate + 2 reduced [2Fe-2S]-[ferredoxin] + 2 H(+). It catalyses the reaction dimethylallyl diphosphate + 2 oxidized [2Fe-2S]-[ferredoxin] + H2O = (2E)-4-hydroxy-3-methylbut-2-enyl diphosphate + 2 reduced [2Fe-2S]-[ferredoxin] + 2 H(+). It functions in the pathway isoprenoid biosynthesis; dimethylallyl diphosphate biosynthesis; dimethylallyl diphosphate from (2E)-4-hydroxy-3-methylbutenyl diphosphate: step 1/1. Its pathway is isoprenoid biosynthesis; isopentenyl diphosphate biosynthesis via DXP pathway; isopentenyl diphosphate from 1-deoxy-D-xylulose 5-phosphate: step 6/6. Its function is as follows. Catalyzes the conversion of 1-hydroxy-2-methyl-2-(E)-butenyl 4-diphosphate (HMBPP) into a mixture of isopentenyl diphosphate (IPP) and dimethylallyl diphosphate (DMAPP). Acts in the terminal step of the DOXP/MEP pathway for isoprenoid precursor biosynthesis. This chain is 4-hydroxy-3-methylbut-2-enyl diphosphate reductase, found in Methylocella silvestris (strain DSM 15510 / CIP 108128 / LMG 27833 / NCIMB 13906 / BL2).